Here is a 452-residue protein sequence, read N- to C-terminus: Kremen protein 1 (452 aa).

An N-terminal signal peptide occupies residues 1–22 (MVMDIWTISLRILLFPSALVLC). The Extracellular portion of the chain corresponds to 23 to 369 (SDSFHSECYT…TTSPSRPSGH (347 aa)). The region spanning 29–112 (ECYTVNGADY…YWKYCDIPAC (84 aa)) is the Kringle domain. 8 disulfides stabilise this stretch: C30-C112, C53-C93, C82-C107, C120-C184, C145-C165, C149-C167, C188-C196, and C212-C238. Residues N43 and N57 are each glycosylated (N-linked (GlcNAc...) asparagine). Residues 114–208 (MPGNLGCFRD…DGRIILFDSL (95 aa)) enclose the WSC domain. The CUB domain occupies 212–319 (CGGNYSTDSA…QGFSVVYEAF (108 aa)). N-linked (GlcNAc...) asparagine glycosylation is found at N215, N253, N291, N328, and N344. Residues 370–390 (VPGWTIYALTGLLILTIIAIS) form a helical membrane-spanning segment. Residues 391–452 (AKALLHISMK…HDDRNPLVGE (62 aa)) lie on the Cytoplasmic side of the membrane.

As to quaternary structure, interacts with lrp6.

Its subcellular location is the cell membrane. Receptor for Dickkopf proteins. Cooperates with DKK1/2 proteins to inhibit Wnt/beta-catenin signaling by promoting the endocytosis of Wnt receptors LRP5 and LRP6. In the absence of DKK1, potentiates Wnt-beta-catenin signaling by maintaining LRP5 or LRP6 at the cell membrane. This Xenopus laevis (African clawed frog) protein is Kremen protein 1 (kremen1).